The sequence spans 169 residues: Large ribosomal subunit protein uL5 (169 aa).

It belongs to the universal ribosomal protein uL5 family. As to quaternary structure, part of the 50S ribosomal subunit; contacts the 5S rRNA and probably tRNA. Forms a bridge to the 30S subunit in the 70S ribosome.

This is one of the proteins that bind and probably mediate the attachment of the 5S RNA into the large ribosomal subunit, where it forms part of the central protuberance. In the 70S ribosome it contacts protein S13 of the 30S subunit (bridge B1b), connecting the 2 subunits; this bridge is implicated in subunit movement. May contact the P site tRNA; the 5S rRNA and some of its associated proteins might help stabilize positioning of ribosome-bound tRNAs. The polypeptide is Large ribosomal subunit protein uL5 (Methanosarcina barkeri (strain Fusaro / DSM 804)).